The sequence spans 387 residues: Proline-rich protein 5 (387 aa).

Interaction with RICTOR regions lie at residues 10 to 96 (MSSP…LTKG) and 189 to 219 (HESR…YGLY). Residues 11–33 (SSPSLSDLGKREPGAAGADERGT) form a disordered region. The span at 18 to 33 (LGKREPGAAGADERGT) shows a compositional bias: basic and acidic residues. Residue Ser253 is modified to Phosphoserine. Disordered stretches follow at residues 262–347 (NPVA…PETL) and 365–387 (DFGR…PSVV). The segment covering 310–321 (SSPSPHSGPCPS) has biased composition (low complexity). A Phosphoserine modification is found at Ser373.

The protein belongs to the PROTOR family. In terms of assembly, associated component of the mechanistic target of rapamycin complex 2 (mTORC2). Binds directly to MTOR and RICTOR within the TORC2 complex.

In terms of biological role, associated subunit of mTORC2, which regulates cell growth and survival in response to hormonal signals. mTORC2 is activated by growth factors, but, in contrast to mTORC1, seems to be nutrient-insensitive. mTORC2 seems to function upstream of Rho GTPases to regulate the actin cytoskeleton, probably by activating one or more Rho-type guanine nucleotide exchange factors. PRR5 plays an important role in regulation of PDGFRB expression and in modulation of platelet-derived growth factor signaling. May act as a tumor suppressor in breast cancer. This is Proline-rich protein 5 from Rattus norvegicus (Rat).